The following is a 458-amino-acid chain: UDP-N-acetylmuramate--L-alanine ligase (458 aa).

119–125 (GTHGKTT) is an ATP binding site.

This sequence belongs to the MurCDEF family.

Its subcellular location is the cytoplasm. The enzyme catalyses UDP-N-acetyl-alpha-D-muramate + L-alanine + ATP = UDP-N-acetyl-alpha-D-muramoyl-L-alanine + ADP + phosphate + H(+). It functions in the pathway cell wall biogenesis; peptidoglycan biosynthesis. In terms of biological role, cell wall formation. The chain is UDP-N-acetylmuramate--L-alanine ligase from Phocaeicola vulgatus (strain ATCC 8482 / DSM 1447 / JCM 5826 / CCUG 4940 / NBRC 14291 / NCTC 11154) (Bacteroides vulgatus).